We begin with the raw amino-acid sequence, 77 residues long: Small nuclear ribonucleoprotein G (77 aa).

In terms of domain architecture, Sm spans 2 to 77; that stretch reads VSTPELKKYM…IISLEALDAI (76 aa).

It belongs to the snRNP Sm proteins family. As to quaternary structure, component of the Sm core complex, present in spliceosomal snRNP U1, U2, U4/U6 and U5. The core complex contains SMB1, SMD1, SMD2, SMD3, SME1, SMX3 and SMX2 (Sm proteins B, D1, D2, D3, E, F and G, respectively), and is probably a heptameric ring structure. SMX2 specifically interacts with SME1. Belongs to the CWC complex (or CEF1-associated complex), a spliceosome sub-complex reminiscent of a late-stage spliceosome composed of the U2, U5 and U6 snRNAs and at least BUD13, BUD31, BRR2, CDC40, CEF1, CLF1, CUS1, CWC2, CWC15, CWC21, CWC22, CWC23, CWC24, CWC25, CWC27, ECM2, HSH155, IST3, ISY1, LEA1, MSL1, NTC20, PRP8, PRP9, PRP11, PRP19, PRP21, PRP22, PRP45, PRP46, SLU7, SMB1, SMD1, SMD2, SMD3, SMX2, SMX3, SNT309, SNU114, SPP2, SYF1, SYF2, RSE1 and YJU2. Component of the U4/U6-U5 tri-snRNP complex composed of the U4, U6 and U5 snRNAs and at least PRP3, PRP4, PRP6, PRP8, PRP18, PRP31, PRP38, SNU13, SNU23, SNU66, SNU114, SPP381, SMB1, SMD1, SMD2, SMD3, SMX2, SMX3, LSM2, LSM3, LSM4, LSM5, LSM6, LSM7, LSM8, BRR2 and DIB1.

It is found in the nucleus. The protein resides in the cytoplasm. Functionally, plays a role in pre-mRNA splicing as a core component of the spliceosomal U1, U2, U4 and U5 small nuclear ribonucleoproteins (snRNPs), the building blocks of the spliceosome. The sequence is that of Small nuclear ribonucleoprotein G (SMX2) from Saccharomyces cerevisiae (strain ATCC 204508 / S288c) (Baker's yeast).